A 343-amino-acid polypeptide reads, in one-letter code: GTPase Obg (343 aa).

Residues 1 to 157 (MKFIDEVSIS…IEVRLELKLI (157 aa)) form the Obg domain. The segment at 13–44 (SGRGGPGCVSFRRESMQARGGPDGGNGGKGGD) is disordered. Residues 33–43 (GPDGGNGGKGG) are compositionally biased toward gly residues. In terms of domain architecture, OBG-type G spans 158-338 (ADVGIVGFPN…FVQELARQIL (181 aa)). GTP-binding positions include 164 to 171 (GFPNAGKS), 189 to 193 (FTTLT), 211 to 214 (DIPG), 290 to 293 (NKID), and 319 to 321 (SAV). Residues Ser-171 and Thr-191 each coordinate Mg(2+).

It belongs to the TRAFAC class OBG-HflX-like GTPase superfamily. OBG GTPase family. Monomer. It depends on Mg(2+) as a cofactor.

It is found in the cytoplasm. Its function is as follows. An essential GTPase which binds GTP, GDP and possibly (p)ppGpp with moderate affinity, with high nucleotide exchange rates and a fairly low GTP hydrolysis rate. Plays a role in control of the cell cycle, stress response, ribosome biogenesis and in those bacteria that undergo differentiation, in morphogenesis control. The chain is GTPase Obg from Bdellovibrio bacteriovorus (strain ATCC 15356 / DSM 50701 / NCIMB 9529 / HD100).